The primary structure comprises 703 residues: Pentatricopeptide repeat-containing protein At1g22830 (703 aa).

15 PPR repeats span residues 82 to 116 (VLYSSASLLSTCVGFNEFVPGQQLHAHCISSGLEF), 117 to 147 (DSVLVPKLVTFYSAFNLLDEAQTITENSEIL), 148 to 182 (HPLPWNVLIGSYIRNKRFQESVSVYKRMMSKGIRA), 183 to 217 (DEFTYPSVIKACAALLDFAYGRVVHGSIEVSSHRC), 218 to 248 (NLYVCNALISMYKRFGKVDVARRLFDRMSER), 249 to 283 (DAVSWNAIINCYTSEEKLGEAFKLLDRMYLSGVEA), 284 to 318 (SIVTWNTIAGGCLEAGNYIGALNCVVGMRNCNVRI), 319 to 353 (GSVAMINGLKACSHIGALKWGKVFHCLVIRSCSFS), 356 to 386 (IDNVRNSLITMYSRCSDLRHAFIVFQQVEAN), 387 to 421 (SLSTWNSIISGFAYNERSEETSFLLKEMLLSGFHP), 422 to 452 (NHITLASILPLFARVGNLQHGKEFHCYILRR), 458 to 488 (CLILWNSLVDMYAKSGEIIAAKRVFDSMRKR), 489 to 523 (DKVTYTSLIDGYGRLGKGEVALAWFKDMDRSGIKP), 524 to 554 (DHVTMVAVLSACSHSNLVREGHWLFTKMEHV), and 560 to 594 (RLEHYSCMVDLYCRAGYLDKARDIFHTIPYEPSSA). Residues 595 to 671 (MCATLLKACL…AHEFALMETD (77 aa)) form a type E motif region. A disordered region spans residues 671–703 (DSELDGENNKPMNDDSVINQEQSSDEERLVEVG).

It belongs to the PPR family. PCMP-E subfamily.

This Arabidopsis thaliana (Mouse-ear cress) protein is Pentatricopeptide repeat-containing protein At1g22830 (PCMP-E24).